A 172-amino-acid polypeptide reads, in one-letter code: Co-chaperone protein HscB homolog (172 aa).

Residues 2 to 69 enclose the J domain; sequence NHFELFNLPV…DSRAAYLLAL (68 aa).

The protein belongs to the HscB family. As to quaternary structure, interacts with HscA and stimulates its ATPase activity.

Its function is as follows. Co-chaperone involved in the maturation of iron-sulfur cluster-containing proteins. Seems to help targeting proteins to be folded toward HscA. The protein is Co-chaperone protein HscB homolog of Acinetobacter baumannii (strain AB307-0294).